The primary structure comprises 100 residues: uncharacterized protein (100 aa).

Residues 68–91 show a composition bias toward basic and acidic residues; sequence EQYASGAGEKRKEQSSGNSRRKDP. The segment at 68–100 is disordered; it reads EQYASGAGEKRKEQSSGNSRRKDPSLYNWSDVK.

It belongs to the chlamydial CPn_0121/CT_031/TC_0300 family.

This is an uncharacterized protein from Chlamydia muridarum (strain MoPn / Nigg).